A 32-amino-acid polypeptide reads, in one-letter code: Natriuretic peptide Coa_NP2 (32 aa).

C8 and C24 are oxidised to a cystine.

The protein belongs to the natriuretic peptide family. Snake NP subfamily. In terms of tissue distribution, expressed by the venom gland.

The protein resides in the secreted. Its function is as follows. Snake venom natriuretic peptide that exhibits hypotensive and vasorelaxant effects. Produces a dose-dependent hypotension in rats, followed by significant increases in concentrations of markers of nitric oxide (NO) formation measured in the plasma and vasorelaxation in a thoracic aortic ring bath. The peptide may exert its hypotensive action, at least in part, through stimulation of NO production. The vasorelaxant effect is endothelium-dependent and does not appear to be mediated by the natriuretic peptide receptor-A, as its action is not modified by isatin (a potent NPR1 antagonist). May act by activating the natriuretic peptide receptor-B (NPR2). This is Natriuretic peptide Coa_NP2 from Crotalus lutosus abyssus (Grand Canyon rattlesnake).